Reading from the N-terminus, the 298-residue chain is MLYQQIARNKRKTILVMFGFFVLLALIGAAIGYLFARTVIGGMIIAAIIAVIYMSVIIGQSTDVVMRMNNATEVRSASDAPELWHIVEDMALVARVPMPKVYIIHDPSPNAFATGNDPEHAAVAATTGLMEKMNREELEGVMAHEMTHVRNYDIRLQTIALALASAIAMLVNFAGNFWWIGGRSSSDDRDNPSSIFAILGSILLIILAPLAATIAQMALSRNREYLADAGAVELTRNPQGMISALEKLKTAVPMKHVDPSSSALYISDPEKNAKHHPFSNLFDTHPPLDKRIERLRQM.

Helical transmembrane passes span 14 to 34 (ILVM…IGYL) and 39 to 59 (VIGG…VIIG). Histidine 144 contributes to the Zn(2+) binding site. Glutamate 145 is an active-site residue. Histidine 148 contacts Zn(2+). 2 helical membrane-spanning segments follow: residues 159–179 (IALA…NFWW) and 195–215 (IFAI…ATIA). Glutamate 224 contributes to the Zn(2+) binding site.

It belongs to the peptidase M48B family. Zn(2+) is required as a cofactor.

The protein localises to the cell membrane. The chain is Protease HtpX homolog from Limosilactobacillus reuteri (strain DSM 20016) (Lactobacillus reuteri).